Reading from the N-terminus, the 1050-residue chain is TSC22 domain family protein 1 (1050 aa).

Residues 1-99 (MHQPPESTAA…SQAQLQGQPL (99 aa)) are required for interaction with TGFBR1 and promotion of TGF-beta signaling. Disordered regions lie at residues 22-111 (MAHP…KKSG), 126-285 (ISSN…VSSA), 445-479 (QTPT…SVGS), 511-531 (DFSS…VQLQ), 581-609 (LAQP…QLQY), 720-740 (VQPP…PPSS), 795-847 (QLPT…GSLV), and 879-919 (SLAQ…VSDG). Positions 38–55 (ASALSAAGTGVSGAAPSS) are enriched in low complexity. The span at 58–71 (FPPPSSLLQPPPPA) shows a compositional bias: pro residues. Residues 85–97 (SLNLLSQAQLQGQ) are compositionally biased toward low complexity. A compositionally biased stretch (acidic residues) spans 134–143 (EDTESYDDLD). The span at 217–241 (HPHHLHHHHHIHHGHHLHHGHHHSS) shows a compositional bias: basic residues. Position 265 is a phosphoserine (Ser-265). Residues 458-476 (TSGSSVSSSVSTLSHYTES) show a composition bias toward low complexity. Pro residues predominate over residues 586 to 603 (LPYPQPAPPVQTPLPGAP). Low complexity predominate over residues 906–919 (LSGDSGGVSAVSDG). A leucine-zipper region spans residues 983–1004 (LKEQIKELIEKNSQLEQENNLL). Positions 1015–1050 (QFQAQLQTGSPPATTQPQGTTQPPAQPASQGSGSTA) are disordered. Over residues 1021–1050 (QTGSPPATTQPQGTTQPPAQPASQGSGSTA) the composition is skewed to low complexity.

It belongs to the TSC-22/Dip/Bun family. Forms homodimers. Forms heterodimers. Component of a complex composed of TSC22D1 (via N-terminus), TGFBR1 and TGFBR2; the interaction between TSC22D1 and TGFBR1 is inhibited by SMAD7 and promoted by TGFB1. Interacts with SMAD7; the interaction requires TGF-beta and the interaction is inhibited by TGFBR1. Interacts with TPT1/fortilin; interaction results in the destabilization of TSC22D1 protein and prevents TSC22D1-mediated apoptosis. Interacts with SMAD4 (via N-terminus). Interacts with ACVRL1/ALK1, ACVR1/ALK2, BMPR1A/ALK3, ACVR1B/ALK4, BMPR1B/ALK6, ACVR2A/ACTRII, and BMPR2. Interacts with SMAD6. Interacts with TFE3; the interaction is enhanced in the presence of TGF-beta. As to quaternary structure, forms a heterodimer with TSC22D4/THG1. In terms of assembly, forms a heterodimer with TSC22D4/THG1. Interacts with histone H1-2. Interacts with GNL3. In terms of tissue distribution, ubiquitously expressed, abundantly expressed in testis, ovary, uterus, and lung. Expressed in cardiomyocytes.

It localises to the cytoplasm. It is found in the nucleus. Its subcellular location is the cell membrane. The protein localises to the mitochondrion. Its function is as follows. Transcriptional repressor. Acts on the C-type natriuretic peptide (CNP) promoter. Acts to promote CASP3-mediated apoptosis. Positively regulates TGF-beta signaling by interacting with SMAD7 which inhibits binding of SMAD7 to TGFBR1, preventing recruitment of SMURF ubiquitin ligases to TGFBR1 and inhibiting SMURF-mediated ubiquitination and degradation of TGFBR1. Contributes to enhancement of TGF-beta signaling by binding to and modulating the transcription activator activity of SMAD4. Promotes TGF-beta-induced transcription of COL1A2; via its interaction with TFE3 at E-boxes in the gene proximal promoter. Plays a role in the repression of hematopoietic precursor cell growth. Promotes IL2 deprivation-induced apoptosis in T-lymphocytes, via repression of TSC22D3/GILZ transcription and activation of the caspase cascade. In terms of biological role, may act to negatively regulate TGFB3 signaling and thereby inhibit cell death in mammary gland cells. Positively regulates cell death in response to TGFB3 during mammary gland involution. In Rattus norvegicus (Rat), this protein is TSC22 domain family protein 1.